The following is a 280-amino-acid chain: 4-diphosphocytidyl-2-C-methyl-D-erythritol kinase (280 aa).

Lysine 8 is an active-site residue. 91-101 (PVSAGLAGGSS) contributes to the ATP binding site. Aspartate 133 is an active-site residue.

The protein belongs to the GHMP kinase family. IspE subfamily.

It catalyses the reaction 4-CDP-2-C-methyl-D-erythritol + ATP = 4-CDP-2-C-methyl-D-erythritol 2-phosphate + ADP + H(+). It participates in isoprenoid biosynthesis; isopentenyl diphosphate biosynthesis via DXP pathway; isopentenyl diphosphate from 1-deoxy-D-xylulose 5-phosphate: step 3/6. Catalyzes the phosphorylation of the position 2 hydroxy group of 4-diphosphocytidyl-2C-methyl-D-erythritol. This is 4-diphosphocytidyl-2-C-methyl-D-erythritol kinase from Clostridium novyi (strain NT).